We begin with the raw amino-acid sequence, 313 residues long: Ribosomal RNA small subunit methyltransferase H (313 aa).

S-adenosyl-L-methionine contacts are provided by residues 35-37 (GGH), Asp-55, Phe-80, Asp-102, and Gln-109.

Belongs to the methyltransferase superfamily. RsmH family.

It is found in the cytoplasm. It carries out the reaction cytidine(1402) in 16S rRNA + S-adenosyl-L-methionine = N(4)-methylcytidine(1402) in 16S rRNA + S-adenosyl-L-homocysteine + H(+). In terms of biological role, specifically methylates the N4 position of cytidine in position 1402 (C1402) of 16S rRNA. This is Ribosomal RNA small subunit methyltransferase H from Shewanella frigidimarina (strain NCIMB 400).